A 256-amino-acid chain; its full sequence is Small ribosomal subunit protein eS1 (256 aa).

The span at 1–18 shows a compositional bias: basic residues; it reads MAVGKNKRLSKGKKGVKK. A disordered region spans residues 1-21; sequence MAVGKNKRLSKGKKGVKKRTV. Ala2 carries the post-translational modification N-acetylalanine; partial.

The protein belongs to the eukaryotic ribosomal protein eS1 family. As to quaternary structure, component of the small ribosomal subunit. Mature ribosomes consist of a small (40S) and a large (60S) subunit. The 40S subunit contains about 33 different proteins and 1 molecule of RNA (18S). The 60S subunit contains about 49 different proteins and 3 molecules of RNA (25S, 5.8S and 5S).

It is found in the cytoplasm. The chain is Small ribosomal subunit protein eS1 (rps1) from Aspergillus niger (strain ATCC MYA-4892 / CBS 513.88 / FGSC A1513).